The sequence spans 371 residues: MEKQKLDLSAYQIRTDLAVETKEILEQENDPNVITKDGIQGIVEKEKEEHGIRIRTVEITKEGEALTSKKAGTYLTLEAQGIREKDSEMQEKVVEVFAHHFAQFLKDRGIQTDASCLVVGLGNWNVTPDALGPLTVESLLVTRHLFELQPENVQEGYRPVSSLSPGVMGLTGIETSDIIQGVIERSKPDFVIAIDALAARAVERVNTTIQISDTGIHPGSGVGNKRKELSKETLGIPVIAIGVPTVVDAVTIASDTIDYVLKHFGRELKDDRPSRSLVPAGLTFGKKKVLNEEDLPDEETRQSFLGIVGTLPEEEKRQLIHEVLAPLGQNLMVTPKEVDTFIDDMANVLANGLNTALHQKISQDNMGSYNH.

Positions 1–16 (MEKQKLDLSAYQIRTD) are excised as a propeptide.

This sequence belongs to the peptidase A25 family. In terms of assembly, homotetramer. In terms of processing, autoproteolytically processed. The inactive tetrameric zymogen termed p46 autoprocesses to a smaller form termed p41, which is active only during spore germination.

It carries out the reaction Endopeptidase action with P4 Glu or Asp, P1 preferably Glu &gt; Asp, P1' hydrophobic and P2' Ala.. In terms of biological role, initiates the rapid degradation of small, acid-soluble proteins during spore germination. The sequence is that of Germination protease from Bacillus pumilus (strain SAFR-032).